We begin with the raw amino-acid sequence, 406 residues long: MSYEKLLERFLTYVKINTRSNPNSTQTPTTQSQVDFALTVLKPEMEAIGLKDVHYLPSNGYLVGTLPATSDRLRHKIGFISHMDTADFNAENITPQIVDYKGGDIELGDSGYILSPKDFPNLNNYHGQTLITTDGKTLLGADDKSGIAEIMTAMEYLASHPEIEHCEIRVGFGPDEEIGIGADKFDVKDFDVDFAYTVDGGPLGELQYETFSAAGLELTFEGRNVHPGTAKNQMINALQLAMDFHSQLPENERPEQTDGYQGFYHLYDLSGTVDQAKSSYIIRDFEEVDFLKRKHLAQDIADNMNEALQSERVKVKLYDQYYNMKKVIEKDMTPINIAKEVMEELDIKPIIEPIRGGTDGSKISFMGIPTPNLFAGGENMHGRFEFVSLQTMEKAVDVILGIVAKD.

H82 is a Zn(2+) binding site. D84 is a catalytic residue. Residue D142 coordinates Zn(2+). The Proton acceptor role is filled by E176. Zn(2+) contacts are provided by E177, D199, and H381.

It belongs to the peptidase M20B family. Zn(2+) is required as a cofactor.

Its subcellular location is the cytoplasm. It catalyses the reaction Release of the N-terminal residue from a tripeptide.. Functionally, cleaves the N-terminal amino acid of tripeptides. This Streptococcus agalactiae serotype V (strain ATCC BAA-611 / 2603 V/R) protein is Peptidase T.